The chain runs to 122 residues: Large ribosomal subunit protein eL8 (122 aa).

The protein belongs to the eukaryotic ribosomal protein eL8 family. In terms of assembly, part of the 50S ribosomal subunit. Probably part of the RNase P complex.

The protein resides in the cytoplasm. Functionally, multifunctional RNA-binding protein that recognizes the K-turn motif in ribosomal RNA, the RNA component of RNase P, box H/ACA, box C/D and box C'/D' sRNAs. The protein is Large ribosomal subunit protein eL8 of Methanothrix thermoacetophila (strain DSM 6194 / JCM 14653 / NBRC 101360 / PT) (Methanosaeta thermophila).